Reading from the N-terminus, the 880-residue chain is Leucine--tRNA ligase (880 aa).

The short motif at 46–56 (PYPSGALHMGH) is the 'HIGH' region element. Positions 638-642 (KMSKS) match the 'KMSKS' region motif. An ATP-binding site is contributed by lysine 641.

Belongs to the class-I aminoacyl-tRNA synthetase family.

The protein localises to the cytoplasm. The enzyme catalyses tRNA(Leu) + L-leucine + ATP = L-leucyl-tRNA(Leu) + AMP + diphosphate. This chain is Leucine--tRNA ligase, found in Stenotrophomonas maltophilia (strain K279a).